Consider the following 1201-residue polypeptide: Protein dduB (1201 aa).

A signal peptide spans 1 to 22; that stretch reads MKFIKYLLILFLILKINYFVES. Residues 23 to 1180 lie on the Extracellular side of the membrane; sequence GVDCQKNTEY…QDPSDELSTS (1158 aa). N-linked (GlcNAc...) asparagine glycosylation is found at asparagine 68, asparagine 122, asparagine 150, asparagine 185, asparagine 283, asparagine 348, asparagine 360, asparagine 437, asparagine 448, asparagine 518, asparagine 535, asparagine 554, asparagine 585, asparagine 631, asparagine 759, asparagine 815, asparagine 830, asparagine 844, asparagine 946, asparagine 1042, asparagine 1058, asparagine 1098, and asparagine 1108. Residues 1181 to 1201 form a helical membrane-spanning segment; it reads SFIQLNILSLLLISIFTIFIL.

The protein resides in the membrane. The sequence is that of Protein dduB (dduB) from Dictyostelium discoideum (Social amoeba).